We begin with the raw amino-acid sequence, 364 residues long: Ribosomal RNA large subunit methyltransferase F (364 aa).

The interval 1 to 28 (MTNKRKSAKPLEPAKRTPKLRTKKSRDL) is disordered.

This sequence belongs to the methyltransferase superfamily. METTL16/RlmF family.

Its subcellular location is the cytoplasm. The enzyme catalyses adenosine(1618) in 23S rRNA + S-adenosyl-L-methionine = N(6)-methyladenosine(1618) in 23S rRNA + S-adenosyl-L-homocysteine + H(+). Functionally, specifically methylates the adenine in position 1618 of 23S rRNA. This chain is Ribosomal RNA large subunit methyltransferase F, found in Vibrio vulnificus (strain YJ016).